Here is a 239-residue protein sequence, read N- to C-terminus: 1-(5-phosphoribosyl)-5-[(5-phosphoribosylamino)methylideneamino] imidazole-4-carboxamide isomerase (239 aa).

Asp-8 functions as the Proton acceptor in the catalytic mechanism. Asp-129 functions as the Proton donor in the catalytic mechanism.

Belongs to the HisA/HisF family.

It is found in the cytoplasm. The catalysed reaction is 1-(5-phospho-beta-D-ribosyl)-5-[(5-phospho-beta-D-ribosylamino)methylideneamino]imidazole-4-carboxamide = 5-[(5-phospho-1-deoxy-D-ribulos-1-ylimino)methylamino]-1-(5-phospho-beta-D-ribosyl)imidazole-4-carboxamide. The protein operates within amino-acid biosynthesis; L-histidine biosynthesis; L-histidine from 5-phospho-alpha-D-ribose 1-diphosphate: step 4/9. This chain is 1-(5-phosphoribosyl)-5-[(5-phosphoribosylamino)methylideneamino] imidazole-4-carboxamide isomerase, found in Legionella pneumophila (strain Paris).